Here is a 211-residue protein sequence, read N- to C-terminus: Urease accessory protein UreF (211 aa).

Positions 71 to 93 (DDADRETDARTPAPAARHASRSQ) are disordered.

The protein belongs to the UreF family. As to quaternary structure, ureD, UreF and UreG form a complex that acts as a GTP-hydrolysis-dependent molecular chaperone, activating the urease apoprotein by helping to assemble the nickel containing metallocenter of UreC. The UreE protein probably delivers the nickel.

The protein localises to the cytoplasm. In terms of biological role, required for maturation of urease via the functional incorporation of the urease nickel metallocenter. The sequence is that of Urease accessory protein UreF from Mycobacterium tuberculosis (strain ATCC 25177 / H37Ra).